The chain runs to 93 residues: UPF0358 protein BH2626 (93 aa).

It belongs to the UPF0358 family.

The polypeptide is UPF0358 protein BH2626 (Halalkalibacterium halodurans (strain ATCC BAA-125 / DSM 18197 / FERM 7344 / JCM 9153 / C-125) (Bacillus halodurans)).